Consider the following 314-residue polypeptide: Phosphoribosylaminoimidazole-succinocarboxamide synthase (314 aa).

Belongs to the SAICAR synthetase family.

It carries out the reaction 5-amino-1-(5-phospho-D-ribosyl)imidazole-4-carboxylate + L-aspartate + ATP = (2S)-2-[5-amino-1-(5-phospho-beta-D-ribosyl)imidazole-4-carboxamido]succinate + ADP + phosphate + 2 H(+). It functions in the pathway purine metabolism; IMP biosynthesis via de novo pathway; 5-amino-1-(5-phospho-D-ribosyl)imidazole-4-carboxamide from 5-amino-1-(5-phospho-D-ribosyl)imidazole-4-carboxylate: step 1/2. The polypeptide is Phosphoribosylaminoimidazole-succinocarboxamide synthase (Bacteroides fragilis (strain ATCC 25285 / DSM 2151 / CCUG 4856 / JCM 11019 / LMG 10263 / NCTC 9343 / Onslow / VPI 2553 / EN-2)).